The primary structure comprises 227 residues: AN1-type zinc finger protein 3 (227 aa).

The segment at 12–44 (PSLPPRCPCGFWGSSKTMNLCSKCFADFQKKQP) adopts an A20-type zinc-finger fold. Zn(2+) is bound by residues C18, C20, C32, and C35. The tract at residues 41-151 (KKQPDDDSTP…RPEESGRSKQ (111 aa)) is disordered. Low complexity-rich tracts occupy residues 49-59 (TPSTSNSQSDL) and 66-77 (SDNNNTSVTTPT). 2 stretches are compositionally biased toward polar residues: residues 78-94 (LSPS…VTSP) and 111-127 (ITPT…SESE). A compositionally biased stretch (basic and acidic residues) spans 135–148 (RLVENPERPEESGR). The AN1-type zinc finger occupies 151 to 200 (QKSRRRCFQCQTKLELVQQELGSCRCGYVFCMLHRLPEQHDCTFDHMGRG). Zn(2+)-binding residues include C157, C160, C174, C176, C181, H184, H190, and C192.

The polypeptide is AN1-type zinc finger protein 3 (Zfand3) (Rattus norvegicus (Rat)).